We begin with the raw amino-acid sequence, 29 residues long: Cyclotide cter-N (29 aa).

A cross-link (cyclopeptide (Gly-Asn)) is located at residues 1 to 29 (GSAFCGETCVLGTCYTPDCSCTALVCLKN). 3 disulfides stabilise this stretch: C5/C19, C9/C21, and C14/C26.

In terms of processing, this is a cyclic peptide.

The protein resides in the secreted. Its function is as follows. Probably participates in a plant defense mechanism. The protein is Cyclotide cter-N of Clitoria ternatea (Butterfly pea).